The primary structure comprises 450 residues: MRTKSLKKNRINVVTLGCSKNVYDSEILMGQLKANDKDVVHEEDGNIVVINTCGFIDNAKEQSVNTILEFVEKKQQGDVDKVFVTGCLSERYKPDLQKEIPDVDQYFGTTELPGLLSALEADYKHELIGERLTTTPKNYAYLKIAEGCDRPCSFCAIPLMRGGHKSTPIENLVTEAEKLAANGVKELILIAQDLTYYGLDLYKKRNLAELLENLVKVEGIEWIRLHYAFPTGFPMDVLEVMKREPKVCNYLDIPLQHISDDLLKSMRRGTTHEKTTKLLKEFRKTVPEMAIRTTLIVGYPGETEEHYQELKEWVKEMRFERLGCFTYSHEENTHAYNLEDDVPQEVKQERANEIMEIQSQISWELNQQKIGEVFNVVIDRKEGNYFIGRTEYDSPDVDNEVLIDATTVYLKTGDYYDVKIAEAADFDLYGEPLNVTTEKPKRKELKIKSV.

Residues 9 to 124 enclose the MTTase N-terminal domain; the sequence is NRINVVTLGC…LLSALEADYK (116 aa). Positions 18, 53, 87, 148, 152, and 155 each coordinate [4Fe-4S] cluster. One can recognise a Radical SAM core domain in the interval 134 to 365; the sequence is TTPKNYAYLK…EIQSQISWEL (232 aa). The region spanning 367–434 is the TRAM domain; sequence QQKIGEVFNV…DFDLYGEPLN (68 aa).

Belongs to the methylthiotransferase family. RimO subfamily. [4Fe-4S] cluster is required as a cofactor.

The protein localises to the cytoplasm. It catalyses the reaction L-aspartate(89)-[ribosomal protein uS12]-hydrogen + (sulfur carrier)-SH + AH2 + 2 S-adenosyl-L-methionine = 3-methylsulfanyl-L-aspartate(89)-[ribosomal protein uS12]-hydrogen + (sulfur carrier)-H + 5'-deoxyadenosine + L-methionine + A + S-adenosyl-L-homocysteine + 2 H(+). Catalyzes the methylthiolation of an aspartic acid residue of ribosomal protein uS12. The sequence is that of Ribosomal protein uS12 methylthiotransferase RimO from Christiangramia forsetii (strain DSM 17595 / CGMCC 1.15422 / KT0803) (Gramella forsetii).